We begin with the raw amino-acid sequence, 356 residues long: UDP-N-acetylglucosamine--N-acetylmuramyl-(pentapeptide) pyrophosphoryl-undecaprenol N-acetylglucosamine transferase (356 aa).

Residues 12-14, asparagine 120, arginine 163, serine 187, and glutamine 286 each bind UDP-N-acetyl-alpha-D-glucosamine; that span reads SGG.

It belongs to the glycosyltransferase 28 family. MurG subfamily.

It is found in the cell inner membrane. It carries out the reaction di-trans,octa-cis-undecaprenyl diphospho-N-acetyl-alpha-D-muramoyl-L-alanyl-D-glutamyl-meso-2,6-diaminopimeloyl-D-alanyl-D-alanine + UDP-N-acetyl-alpha-D-glucosamine = di-trans,octa-cis-undecaprenyl diphospho-[N-acetyl-alpha-D-glucosaminyl-(1-&gt;4)]-N-acetyl-alpha-D-muramoyl-L-alanyl-D-glutamyl-meso-2,6-diaminopimeloyl-D-alanyl-D-alanine + UDP + H(+). Its pathway is cell wall biogenesis; peptidoglycan biosynthesis. Cell wall formation. Catalyzes the transfer of a GlcNAc subunit on undecaprenyl-pyrophosphoryl-MurNAc-pentapeptide (lipid intermediate I) to form undecaprenyl-pyrophosphoryl-MurNAc-(pentapeptide)GlcNAc (lipid intermediate II). The chain is UDP-N-acetylglucosamine--N-acetylmuramyl-(pentapeptide) pyrophosphoryl-undecaprenol N-acetylglucosamine transferase from Pelagibacter ubique (strain HTCC1062).